The chain runs to 186 residues: Elongation factor P (186 aa).

Belongs to the elongation factor P family.

It localises to the cytoplasm. Its pathway is protein biosynthesis; polypeptide chain elongation. Functionally, involved in peptide bond synthesis. Stimulates efficient translation and peptide-bond synthesis on native or reconstituted 70S ribosomes in vitro. Probably functions indirectly by altering the affinity of the ribosome for aminoacyl-tRNA, thus increasing their reactivity as acceptors for peptidyl transferase. This is Elongation factor P from Neisseria gonorrhoeae (strain NCCP11945).